The sequence spans 159 residues: Small ribosomal subunit protein uS7 (159 aa).

It belongs to the universal ribosomal protein uS7 family. In terms of assembly, part of the 30S ribosomal subunit. Contacts proteins S9 and S11.

Functionally, one of the primary rRNA binding proteins, it binds directly to 16S rRNA where it nucleates assembly of the head domain of the 30S subunit. Is located at the subunit interface close to the decoding center, probably blocks exit of the E-site tRNA. The sequence is that of Small ribosomal subunit protein uS7 from Endomicrobium trichonymphae.